We begin with the raw amino-acid sequence, 531 residues long: T-complex protein 1 subunit zeta-2 (531 aa).

This sequence belongs to the TCP-1 chaperonin family. In terms of assembly, component of the chaperonin-containing T-complex (TRiC), a heterooligomeric complex of about 850 to 900 kDa that forms two stacked rings, 12 to 16 nm in diameter.

The protein localises to the cytoplasm. Component of the chaperonin-containing T-complex (TRiC), a molecular chaperone complex that assists the folding of proteins upon ATP hydrolysis. This is T-complex protein 1 subunit zeta-2 (CCT6B) from Bos taurus (Bovine).